The sequence spans 170 residues: Gas vesicle protein A2 (170 aa).

The interval 86-170 is disordered; that stretch reads SPMAKTVGRA…PRRRTEEEDR (85 aa). Basic and acidic residues-rich tracts occupy residues 104–119 and 127–137; these read LTDK…HEHE and DRPRAGAERGR. The segment covering 138–148 has biased composition (basic residues); that stretch reads STQRPRSRPAA. The span at 149-170 shows a compositional bias: basic and acidic residues; sequence RPRDEDDRPRSRPRRRTEEEDR.

It belongs to the gas vesicle GvpA family. As to quaternary structure, the gas vesicle shell is 2 nm thick and consists of a single layer of this protein. It forms helical ribs nearly perpendicular to the long axis of the vesicle.

Its subcellular location is the gas vesicle shell. Its function is as follows. Gas vesicles are hollow, gas filled proteinaceous nanostructures found in some microorganisms. During planktonic growth they allow positioning of the organism at a favorable depth for light or nutrient acquisition. GvpA forms the protein shell. It is not clear what function GVs perform in soil bacteria. The protein is Gas vesicle protein A2 of Streptomyces coelicolor (strain ATCC BAA-471 / A3(2) / M145).